Reading from the N-terminus, the 476-residue chain is Cys-Gly metallodipeptidase dug1 (476 aa).

His99 is a Zn(2+) binding site. The active site involves Asp101. Asp133 serves as a coordination point for Zn(2+). Glu167 acts as the Proton acceptor in catalysis. Zn(2+)-binding residues include Glu168, Asp196, and His446.

The protein belongs to the peptidase M20A family. Homodimer. Component of the GSH degradosomal complex. It depends on Zn(2+) as a cofactor. Mn(2+) is required as a cofactor.

It localises to the cytoplasm. Catalytic component of the GSH degradosomal complex involved in the degradation of glutathione (GSH) and other peptides containing a gamma-glu-X bond. Has a Gly-Cys dipeptidase activity. In Schizosaccharomyces pombe (strain 972 / ATCC 24843) (Fission yeast), this protein is Cys-Gly metallodipeptidase dug1 (dug1).